We begin with the raw amino-acid sequence, 477 residues long: Histidine--tRNA ligase (477 aa).

Belongs to the class-II aminoacyl-tRNA synthetase family. As to quaternary structure, homodimer.

It localises to the cytoplasm. The enzyme catalyses tRNA(His) + L-histidine + ATP = L-histidyl-tRNA(His) + AMP + diphosphate + H(+). In Xanthomonas campestris pv. campestris (strain ATCC 33913 / DSM 3586 / NCPPB 528 / LMG 568 / P 25), this protein is Histidine--tRNA ligase (hisS).